Here is a 319-residue protein sequence, read N- to C-terminus: 1-aminocyclopropane-1-carboxylate oxidase 1 (319 aa).

In terms of domain architecture, Fe2OG dioxygenase spans 153-253 (PNFGTKVSNY…RMSLASFYNP (101 aa)). Fe cation contacts are provided by H177, D179, and H234.

The protein belongs to the iron/ascorbate-dependent oxidoreductase family. Fe cation serves as cofactor.

The enzyme catalyses 1-aminocyclopropane-1-carboxylate + L-ascorbate + O2 = ethene + L-dehydroascorbate + hydrogen cyanide + CO2 + 2 H2O. It participates in alkene biosynthesis; ethylene biosynthesis via S-adenosyl-L-methionine; ethylene from S-adenosyl-L-methionine: step 2/2. This is 1-aminocyclopropane-1-carboxylate oxidase 1 (ACO1) from Petunia hybrida (Petunia).